A 439-amino-acid chain; its full sequence is SET domain-containing protein 4 (439 aa).

Residues Met-1–Ser-19 show a composition bias toward basic residues. A disordered region spans residues Met-1–Asn-25. The region spanning Thr-47–Gly-272 is the SET domain. Tyr-271 contacts S-adenosyl-L-methionine.

Belongs to the class V-like SAM-binding methyltransferase superfamily. SETD4 family. In terms of assembly, forms a ternary complex with TBK1 and ZNF268; the interaction with TBK1 is ZNF268-dependent and leads to TBK1 monomethylation. As to expression, expressed in the forebrain subventricular zone, in quiescent neural stem cells.

It is found in the cytoplasm. The protein resides in the cytosol. Its subcellular location is the nucleus. It catalyses the reaction L-lysyl(4)-[histone H3] + S-adenosyl-L-methionine = N(6)-methyl-L-lysyl(4)-[histone H3] + S-adenosyl-L-homocysteine + H(+). The catalysed reaction is N(6)-methyl-L-lysyl(4)-[histone H3] + S-adenosyl-L-methionine = N(6),N(6)-dimethyl-L-lysyl(4)-[histone H3] + S-adenosyl-L-homocysteine + H(+). The enzyme catalyses L-lysyl(20)-[histone H4] + S-adenosyl-L-methionine = N(6)-methyl-L-lysyl(20)-[histone H4] + S-adenosyl-L-homocysteine + H(+). It carries out the reaction N(6)-methyl-L-lysyl(20)-[histone H4] + S-adenosyl-L-methionine = N(6),N(6)-dimethyl-L-lysyl(20)-[histone H4] + S-adenosyl-L-homocysteine + H(+). It catalyses the reaction N(6),N(6)-dimethyl-L-lysyl(20)-[histone H4] + S-adenosyl-L-methionine = N(6),N(6),N(6)-trimethyl-L-lysyl(20)-[histone H4] + S-adenosyl-L-homocysteine + H(+). The catalysed reaction is L-lysyl-[protein] + S-adenosyl-L-methionine = N(6)-methyl-L-lysyl-[protein] + S-adenosyl-L-homocysteine + H(+). Its function is as follows. Protein-lysine N-methyltransferase that methylates both histones and non-histone proteins. Via its catalytic activity, regulates many processes, including cell proliferation, cell differentiation, inflammatory response and apoptosis. Regulates the inflammatory response by mediating mono- and dimethylation of 'Lys-4' of histone H3 (H3K4me1 and H3K4me2, respectively), leading to activate the transcription of pro-inflammatory cytokines IL6 and TNF-alpha. Also involved in the regulation of stem cell quiescence by catalyzing the trimethylation of 'Lys-20' of histone H4 (H4K20me3), thereby promoting heterochromatin formation. In the brain, epigenetically controls quiescence of neural stem cells for sustaining a protected neural stem cell population and maintaining a stem cell reservoir for neurogenesis. Involved in proliferation, migration, paracrine and myogenic differentiation of bone marrow mesenchymal stem cells (BMSCs). Through the catalysis of XRCC5/Ku70 trimethylation, regulates BAX-mediated apoptosis. SETD4-catalyzed XRCC5 methylation results in XRCC5 translocation to the cytoplasm, where it interacts with BAX, sequestering it from the mitochondria, hence preventing BAX-mediated apoptosis. This is SET domain-containing protein 4 from Mus musculus (Mouse).